Reading from the N-terminus, the 928-residue chain is MEPRDGSPEARSSDSESASASSSGSERDAGPEPDKAPRRLNKRRFPGLRLFGHRKAITKSGLQHLAPPPPTPGAPCSESERQIRSTVDWSESATYGEHIWFETNVSGDFCYVGEQYCVARMLKSVSRRKCAACKIVVHTPCIEQLEKINFRCKPSFRESGSRNVREPTFVRHHWVHRRRQDGKCRHCGKGFQQKFTFHSKEIVAISCSWCKQAYHSKVSCFMLQQIEEPCSLGVHAAVVIPPTWILRARRPQNTLKASKKKKRASFKRKSSKKGPEEGRWRPFIIRPTPSPLMKPLLVFVNPKSGGNQGAKIIQSFLWYLNPRQVFDLSQGGPKEALEMYRKVHNLRILACGGDGTVGWILSTLDQLRLKPPPPVAILPLGTGNDLARTLNWGGGYTDEPVSKILSHVEEGNVVQLDRWDLHAEPNPEAGPEDRDEGATDRLPLDVFNNYFSLGFDAHVTLEFHESREANPEKFNSRFRNKMFYAGTAFSDFLMGSSKDLAKHIRVVCDGMDLTPKIQDLKPQCVVFLNIPRYCAGTMPWGHPGEHHDFEPQRHDDGYLEVIGFTMTSLAALQVGGHGERLTQCREVVLTTSKAIPVQVDGEPCKLAASRIRIALRNQATMVQKAKRRSAAPLHSDQQPVPEQLRIQVSRVSMHDYEALHYDKEQLKEASVPLGTVVVPGDSDLELCRAHIERLQQEPDGAGAKSPTCQKLSPKWCFLDATTASRFYRIDRAQEHLNYVTEIAQDEIYILDPELLGASARPDLPTPTSPLPTSPCSPTPRSLQGDAAPPQGEELIEAAKRNDFCKLQELHRAGGDLMHRDEQSRTLLHHAVSTGSKDVVRYLLDHAPPEILDAVEENGETCLHQAAALGQRTICHYIVEAGASLMKTDQQGDTPRQRAEKAQDTELAAYLENRQHYQMIQREDQETAV.

Residues 1–14 (MEPRDGSPEARSSD) show a composition bias toward basic and acidic residues. Disordered stretches follow at residues 1-46 (MEPR…RRFP) and 59-82 (KSGL…SERQ). Positions 15–24 (SESASASSSG) are enriched in low complexity. Over residues 25-37 (SERDAGPEPDKAP) the composition is skewed to basic and acidic residues. 2 consecutive Phorbol-ester/DAG-type zinc fingers follow at residues 98–152 (HIWF…NFRC) and 172–230 (HHWV…EEPC). The interval 251–280 (PQNTLKASKKKKRASFKRKSSKKGPEEGRW) is disordered. Residues 257 to 272 (ASKKKKRASFKRKSSK) show a composition bias toward basic residues. The tract at residues 259-273 (KKKKRASFKRKSSKK) is MARCKS homology. The tract at residues 278-416 (GRWRPFIIRP…HVEEGNVVQL (139 aa)) is mediates interaction with RASGRP1. The DAGKc domain occupies 291–425 (PLMKPLLVFV…LDRWDLHAEP (135 aa)). Residues 361-369 (LSTLDQLRL) carry the Nuclear export signal motif. Position 705 is a phosphoserine (Ser-705). The interval 759–788 (ARPDLPTPTSPLPTSPCSPTPRSLQGDAAP) is disordered. The segment covering 763 to 777 (LPTPTSPLPTSPCSP) has biased composition (pro residues). Ser-781 carries the phosphoserine modification. ANK repeat units follow at residues 822–852 (QSRT…EILD) and 857–886 (NGET…SLMK). The short motif at 924–928 (QETAV) is the PDZ-binding element.

It belongs to the eukaryotic diacylglycerol kinase family. In terms of assembly, interacts (via PDZ-binding motif) with the PDZ domain of the syntrophin SNTG1 and that of SNX27. Interacts with IRS1 in the absence of insulin; insulin stimulation decreases this interaction. Found in a ternary complex with IRS1 and PIP5K1A in the absence of insulin. Interacts with PIP5K1A. As to quaternary structure, forms a signaling complex with RASGRP1 and HRAS. Phosphorylation of the MARCKS homology domain by PKC reduces nuclear accumulation of DGK-zeta. In terms of tissue distribution, highest levels in brain, and substantial levels in skeletal muscle, heart, and pancreas. Predominantly expressed in muscle.

The protein resides in the nucleus. It localises to the cytoplasm. The protein localises to the cytosol. It is found in the cell membrane. Its subcellular location is the cell projection. The protein resides in the lamellipodium. The enzyme catalyses a 1,2-diacyl-sn-glycerol + ATP = a 1,2-diacyl-sn-glycero-3-phosphate + ADP + H(+). It carries out the reaction a 1-O-alkyl-sn-glycerol + ATP = a 1-O-alkyl-sn-glycero-3-phosphate + ADP + H(+). It catalyses the reaction 1-O-alkyl-2-acyl-sn-glycerol + ATP = 1-O-alkyl-2-acyl-sn-glycero-3-phosphate + ADP + H(+). The catalysed reaction is 1,2-didecanoyl-sn-glycerol + ATP = 1,2-didecanoyl-sn-glycero-3-phosphate + ADP + H(+). The enzyme catalyses 1,2-ditetradecanoyl-sn-glycerol + ATP = 1,2-ditetradecanoyl-sn-glycero-3-phosphate + ADP + H(+). It carries out the reaction 1-hexadecanoyl-2-(9Z-octadecenoyl)-sn-glycerol + ATP = 1-hexadecanoyl-2-(9Z-octadecenoyl)-sn-glycero-3-phosphate + ADP + H(+). It catalyses the reaction 1-hexadecanoyl-2-(5Z,8Z,11Z,14Z-eicosatetraenoyl)-sn-glycerol + ATP = 1-hexadecanoyl-2-(5Z,8Z,11Z,14Z-eicosatetraenoyl)-sn-glycero-3-phosphate + ADP + H(+). The catalysed reaction is 1-octadecanoyl-2-(9Z-octadecenoyl)-sn-glycerol + ATP = 1-octadecanoyl-2-(9Z-octadecenoyl)-sn-glycero-3-phosphate + ADP + H(+). The enzyme catalyses 1-octadecanoyl-2-(5Z,8Z,11Z,14Z-eicosatetraenoyl)-sn-glycerol + ATP = 1-octadecanoyl-2-(5Z,8Z,11Z,14Z-eicosatetraenoyl)-sn-glycero-3-phosphate + ADP + H(+). It carries out the reaction 1-octadecanoyl-2-(4Z,7Z,10Z,13Z,16Z,19Z-docosahexaenoyl)-sn-glycerol + ATP = 1-octadecanoyl-2-(4Z,7Z,10Z,13Z,16Z,19Z-docosahexaenoyl)-sn-glycero-3-phosphate + ADP + H(+). It catalyses the reaction 1,2-di-(9Z-octadecenoyl)-sn-glycerol + ATP = 1,2-di-(9Z-octadecenoyl)-sn-glycero-3-phosphate + ADP + H(+). The catalysed reaction is 1-(9Z-octadecenoyl)-2-hexadecanoyl-sn-glycerol + ATP = 1-(9Z)-octadecenoyl-2-hexadecanoyl-sn-glycero-3-phosphate + ADP + H(+). The enzyme catalyses 1-eicosanoyl-2-(5Z,8Z,11Z,14Z)-eicosatetraenoyl-sn-glycerol + ATP = 1-eicosanoyl-2-(5Z,8Z,11Z,14Z)-eicosatetraenoyl-sn-glycero-3-phosphate + ADP + H(+). It carries out the reaction 1,2-di-(5Z,8Z,11Z,14Z)-eicosatetraenoyl-sn-glycerol + ATP = 1,2-di-(5Z,8Z,11Z,14Z)-eicosatetraenoyl-sn-glycero-3-phosphate + ADP + H(+). It catalyses the reaction 1-O-hexadecyl-2-acetyl-sn-glycerol + ATP = 1-O-hexadecyl-2-acetyl-sn-glycero-3-phosphate + ADP + H(+). The catalysed reaction is 1-O-hexadecyl-2-(5Z,8Z,11Z,14Z-eicosatetraenoyl)-sn-glycerol + ATP = 1-O-hexadecyl-2-(5Z,8Z,11Z,14Z-eicosatetraenoyl)-sn-glycero-3-phosphate + ADP + H(+). The enzyme catalyses 1-O-hexadecyl-2-(9Z-octadecenoyl)-sn-glycerol + ATP = 1-O-hexadecyl-2-(9Z-octadecenoyl)-sn-glycero-3-phosphate + ADP + H(+). It carries out the reaction 1-O-hexadecyl-sn-glycerol + ATP = 1-O-hexadecyl-sn-glycero-3-phosphate + ADP + H(+). Its pathway is lipid metabolism; glycerolipid metabolism. Activated by 1,2-diacyl-sn-glycero-3-phosphate/phosphatidic acid irrespective of its acyl chain composition. Its function is as follows. Diacylglycerol kinase that converts diacylglycerol/DAG into phosphatidic acid/phosphatidate/PA and regulates the respective levels of these two bioactive lipids. Thereby, acts as a central switch between the signaling pathways activated by these second messengers with different cellular targets and opposite effects in numerous biological processes. Also plays an important role in the biosynthesis of complex lipids. Does not exhibit an acyl chain-dependent substrate specificity among diacylglycerol species. Can also phosphorylate 1-alkyl-2-acylglycerol in vitro but less efficiently and with a preference for alkylacylglycerols containing an arachidonoyl group. The biological processes it is involved in include T cell activation since it negatively regulates T-cell receptor signaling which is in part mediated by diacylglycerol. By generating phosphatidic acid, stimulates PIP5KIA activity which regulates actin polymerization. Through the same mechanism could also positively regulate insulin-induced translocation of SLC2A4 to the cell membrane. Functionally, regulates RASGRP1 activity. In terms of biological role, does not regulate RASGRP1 activity. In Homo sapiens (Human), this protein is Diacylglycerol kinase zeta.